We begin with the raw amino-acid sequence, 218 residues long: Attacin-B (218 aa).

The signal sequence occupies residues 1–17; sequence MQKTSILILALFAIAEA. The propeptide occupies 18 to 28; the sequence is VPTTGPIRVRR.

It belongs to the attacin/sarcotoxin-2 family. In terms of tissue distribution, hemolymph (at protein level).

The protein resides in the secreted. Hemolymph antibacterial protein. This Drosophila melanogaster (Fruit fly) protein is Attacin-B (AttB).